Consider the following 697-residue polypeptide: Probable glutamine--tRNA ligase (697 aa).

Positions 204–214 (PEPNGILHIGH) match the 'HIGH' region motif. Residues 205–207 (EPN) and 211–217 (HIGHAKA) contribute to the ATP site. 2 residues coordinate L-glutamine: Asp-237 and Tyr-386. Residues Thr-405, 434–435 (RL), and 442–444 (LSK) each bind ATP. A 'KMSKS' region motif is present at residues 441 to 445 (VLSKR).

Belongs to the class-I aminoacyl-tRNA synthetase family.

The enzyme catalyses tRNA(Gln) + L-glutamine + ATP = L-glutaminyl-tRNA(Gln) + AMP + diphosphate. The protein is Probable glutamine--tRNA ligase of Encephalitozoon cuniculi (strain GB-M1) (Microsporidian parasite).